The primary structure comprises 86 residues: Sugar transporter SemiSWEET (86 aa).

Helical transmembrane passes span Pro3–Pro23, Ile37–Leu57, and Asp61–Met81. Residues Ile6 to Pro63 form the PQ-loop domain.

Homodimer. Homooligomer.

It localises to the cell membrane. In terms of biological role, mediates sucrose transmembrane transport down a concentration gradient. This is Sugar transporter SemiSWEET from Bradyrhizobium diazoefficiens (strain JCM 10833 / BCRC 13528 / IAM 13628 / NBRC 14792 / USDA 110).